A 530-amino-acid chain; its full sequence is UPF0422 protein lpl2888 (530 aa).

The N-terminal stretch at 1–19 is a signal peptide; sequence MKFKKIILALACLSSPLYA. Residues 20–66 adopt a coiled-coil conformation; that stretch reads DQDQQLKSEIQRLQHQAEDLQAQLNRLQKQLANHKSSQQKHEQQAAT. Positions 50–81 are disordered; that stretch reads LANHKSSQQKHEQQAATKPAEPQSKPTVKSGA.

It belongs to the UPF0422 family.

The protein is UPF0422 protein lpl2888 of Legionella pneumophila (strain Lens).